The chain runs to 106 residues: UPF0145 protein SCO3412 (106 aa).

The protein belongs to the UPF0145 family.

The sequence is that of UPF0145 protein SCO3412 from Streptomyces coelicolor (strain ATCC BAA-471 / A3(2) / M145).